The following is a 346-amino-acid chain: GTP 3',8-cyclase (346 aa).

One can recognise a Radical SAM core domain in the interval 10-240 (QRSRPLRVLR…VTRIRARWPL (231 aa)). Arginine 19 contributes to the GTP binding site. Residues cysteine 26 and cysteine 30 each contribute to the [4Fe-4S] cluster site. Position 32 (tyrosine 32) interacts with S-adenosyl-L-methionine. Cysteine 33 serves as a coordination point for [4Fe-4S] cluster. GTP is bound at residue arginine 65. Residue glycine 69 coordinates S-adenosyl-L-methionine. Threonine 104 contacts GTP. An S-adenosyl-L-methionine-binding site is contributed by serine 129. Lysine 177 is a binding site for GTP. S-adenosyl-L-methionine is bound at residue methionine 211. [4Fe-4S] cluster contacts are provided by cysteine 274 and cysteine 277. 279-281 (RLR) provides a ligand contact to GTP. Cysteine 291 serves as a coordination point for [4Fe-4S] cluster. The segment at 326 to 346 (SDERQQTTGSMPHAEMAYLGG) is disordered.

Belongs to the radical SAM superfamily. MoaA family. As to quaternary structure, monomer and homodimer. Requires [4Fe-4S] cluster as cofactor.

It carries out the reaction GTP + AH2 + S-adenosyl-L-methionine = (8S)-3',8-cyclo-7,8-dihydroguanosine 5'-triphosphate + 5'-deoxyadenosine + L-methionine + A + H(+). Its pathway is cofactor biosynthesis; molybdopterin biosynthesis. Catalyzes the cyclization of GTP to (8S)-3',8-cyclo-7,8-dihydroguanosine 5'-triphosphate. The protein is GTP 3',8-cyclase of Parasynechococcus marenigrum (strain WH8102).